Consider the following 358-residue polypeptide: Arogenate dehydrogenase 2, chloroplastic (358 aa).

Residues 1-36 constitute a chloroplast transit peptide; the sequence is MLLHFSPAKPLISPPNLRRNSPTFLISPPRSLRIRA. One can recognise a Prephenate/arogenate dehydrogenase domain in the interval 59 to 338; sequence LKIAVLGFGN…KKTEQKLLND (280 aa). Positions 336–358 are disordered; sequence LNDGGVVPMNDISSSSSSSSSSS. A compositionally biased stretch (low complexity) spans 348-358; that stretch reads SSSSSSSSSSS.

Belongs to the prephenate/arogenate dehydrogenase family. Expressed in roots, stems, leaves, flowers, siliques and seeds. More abundant in seeds.

It localises to the plastid. The protein localises to the chloroplast. The enzyme catalyses L-arogenate + NADP(+) = L-tyrosine + CO2 + NADPH. It functions in the pathway amino-acid biosynthesis; L-tyrosine biosynthesis; L-tyrosine from L-arogenate (NADP(+) route): step 1/1. Its function is as follows. Involved in the biosynthesis of tyrosine. Has a weak prephenate dehydrogenase activity. The chain is Arogenate dehydrogenase 2, chloroplastic (TYRAAT2) from Arabidopsis thaliana (Mouse-ear cress).